The sequence spans 354 residues: Tribbles homolog 3 (354 aa).

The interval 1–127 (MRATPLAASA…QHVARPTEVL (127 aa)) is interaction with DDIT3/CHOP. Residues 36 to 61 (RDEPEPGPLPSLLPPSPPPASDLSPA) form a disordered region. Pro residues predominate over residues 41–55 (PGPLPSLLPPSPPPA). One can recognise a Protein kinase domain in the interval 68-315 (LGPYILLERE…ALGILLHPWL (248 aa)). Basic and acidic residues predominate over residues 320-333 (GRVSPPQSDRREMD). The interval 320–354 (GRVSPPQSDRREMDQVVPDGPQLEEAEEGEVGLYG) is disordered. Residues 341 to 354 (QLEEAEEGEVGLYG) show a composition bias toward acidic residues.

Belongs to the protein kinase superfamily. CAMK Ser/Thr protein kinase family. Tribbles subfamily. As to quaternary structure, interacts with AKT1, AKT2, MAP2K1 and MAP2K7. Interacts with ATF4. Interacts with DDIT3/CHOP and inhibits its interaction with EP300/P300. Interacts with APOBEC3C. Interacts (via N-terminus) with APOBEC3A. Interacts with RELA. Highly expressed in liver. Not detected in heart, brain, spleen, lung, skeletal muscle, kidney or testis.

Its subcellular location is the nucleus. Inactive protein kinase which acts as a regulator of the integrated stress response (ISR), a process for adaptation to various stress. Inhibits the transcriptional activity of DDIT3/CHOP and is involved in DDIT3/CHOP-dependent cell death during ER stress. May play a role in programmed neuronal cell death but does not appear to affect non-neuronal cells. Acts as a negative feedback regulator of the ATF4-dependent transcription during the ISR: while TRIB3 expression is promoted by ATF4, TRIB3 protein interacts with ATF4 and inhibits ATF4 transcription activity. Disrupts insulin signaling by binding directly to Akt kinases and blocking their activation. May bind directly to and mask the 'Thr-308' phosphorylation site in AKT1. Interacts with the NF-kappa-B transactivator p65 RELA and inhibits its phosphorylation and thus its transcriptional activation activity. Interacts with MAPK kinases and regulates activation of MAP kinases. Can inhibit APOBEC3A editing of nuclear DNA. In Mus musculus (Mouse), this protein is Tribbles homolog 3 (Trib3).